The following is a 1209-amino-acid chain: Major DNA-binding protein (1209 aa).

Residues 290–312 are disordered; it reads NAGKGSGRAQRQGDGSGSKNSAS. Residues 503-516 fold into a zinc finger; it reads CGLCNQATRPACAH. The Required for filament formation signature appears at 849–850; that stretch reads FW. Residues 1182 to 1209 are required for nuclear localization; that stretch reads QKRSLPDDILFDMGAPPEKKSGLTFDML.

It belongs to the herpesviridae major DNA-binding protein family. In terms of assembly, homooligomers. Forms double-helical filaments necessary for the formation of replication compartments within the host nucleus. Interacts with the origin-binding protein. Interacts with the helicase primase complex; this interaction stimulates primer synthesis activity of the helicase-primase complex. Interacts with the DNA polymerase. Interacts with the alkaline exonuclease; this interaction increases its nuclease processivity.

It localises to the host nucleus. In terms of biological role, plays several crucial roles in viral infection. Participates in the opening of the viral DNA origin to initiate replication by interacting with the origin-binding protein. May disrupt loops, hairpins and other secondary structures present on ssDNA to reduce and eliminate pausing of viral DNA polymerase at specific sites during elongation. Promotes viral DNA recombination by performing strand-transfer, characterized by the ability to transfer a DNA strand from a linear duplex to a complementary single-stranded DNA circle. Can also catalyze the renaturation of complementary single strands. Additionally, reorganizes the host cell nucleus, leading to the formation of prereplicative sites and replication compartments. This process is driven by the protein which can form double-helical filaments in the absence of DNA. The chain is Major DNA-binding protein from Equine herpesvirus 1 (strain V592) (EHV-1).